We begin with the raw amino-acid sequence, 79 residues long: Small ribosomal subunit protein bS18 (79 aa).

The protein belongs to the bacterial ribosomal protein bS18 family. Part of the 30S ribosomal subunit. Forms a tight heterodimer with protein bS6.

Binds as a heterodimer with protein bS6 to the central domain of the 16S rRNA, where it helps stabilize the platform of the 30S subunit. This is Small ribosomal subunit protein bS18 from Micrococcus luteus (strain ATCC 4698 / DSM 20030 / JCM 1464 / CCM 169 / CCUG 5858 / IAM 1056 / NBRC 3333 / NCIMB 9278 / NCTC 2665 / VKM Ac-2230) (Micrococcus lysodeikticus).